We begin with the raw amino-acid sequence, 451 residues long: MQDNLPQIWEKTLNLIKPELTEVSFTTWIKSIEVISLEGNTMILGVPNVFTKDILTARYATLISNALKQTTSKNFEIRFIVPSEEKISKTEESQKKLEGSVNISVASDQFVSNNLNPKYTFDTFVIGNSNRFAHAASLAVAESPAKAYNPLFLYGGVGLGKTHLMHAIGHFILQNNPKAKVVYVSSETFTNELINSIRHDRNVEFRNRFRTIDVLLVDDIQFIAGKESTQEEFFHTFNALHESNKQIIISSDRPPKEIPTLEDRLRSRFEWGLITDIQPPDLETRIAILYKKAQMENIDVPNEVLTHIAKKIQSNIRELEGALIRIVAYSSLTNSEITVELASEALKELFSSKARQLNIDLIKEVVANKYNMKIEDFNSKKRTRSISYPRQIAMYLSRELTDLSLPKIGEEFGGRDHTTVMHAHEKISKDILADDNIKEKIERIAKEIKGD.

Residues 1 to 73 form a domain I, interacts with DnaA modulators region; sequence MQDNLPQIWE…SNALKQTTSK (73 aa). The domain II stretch occupies residues 73–113; sequence KNFEIRFIVPSEEKISKTEESQKKLEGSVNISVASDQFVSN. The interval 114 to 330 is domain III, AAA+ region; that stretch reads NLNPKYTFDT…GALIRIVAYS (217 aa). Residues Gly-158, Gly-160, Lys-161, and Thr-162 each coordinate ATP. Residues 331–451 form a domain IV, binds dsDNA region; sequence SLTNSEITVE…ERIAKEIKGD (121 aa).

The protein belongs to the DnaA family. Oligomerizes as a right-handed, spiral filament on DNA at oriC.

The protein localises to the cytoplasm. Its function is as follows. Plays an essential role in the initiation and regulation of chromosomal replication. ATP-DnaA binds to the origin of replication (oriC) to initiate formation of the DNA replication initiation complex once per cell cycle. Binds the DnaA box (a 9 base pair repeat at the origin) and separates the double-stranded (ds)DNA. Forms a right-handed helical filament on oriC DNA; dsDNA binds to the exterior of the filament while single-stranded (ss)DNA is stabiized in the filament's interior. The ATP-DnaA-oriC complex binds and stabilizes one strand of the AT-rich DNA unwinding element (DUE), permitting loading of DNA polymerase. After initiation quickly degrades to an ADP-DnaA complex that is not apt for DNA replication. Binds acidic phospholipids. This Alkaliphilus oremlandii (strain OhILAs) (Clostridium oremlandii (strain OhILAs)) protein is Chromosomal replication initiator protein DnaA.